The sequence spans 457 residues: Peptidyl-prolyl cis-trans isomerase FKBP5 (457 aa).

Methionine 1 is modified (N-acetylmethionine). Residues 1-26 (MTTDEGAKNNGESPTATVAEQGEDIT) form a disordered region. Serine 13 is modified (phosphoserine). PPIase FKBP-type domains lie at 50 to 138 (GDKV…LDFK) and 165 to 251 (GATV…KSFE). 3 TPR repeats span residues 268-301 (AAIV…LEME), 317-350 (LAAF…DSAN), and 351-384 (GKGL…NPQN). Residues 420 to 457 (DAKEEANKAMGKKTSEGVTNEKGTDSQAMEEEKPEGHV) are disordered. Serine 445 carries the post-translational modification Phosphoserine.

As to quaternary structure, part of a heteromultimeric cytoplasmic complex with HSP90AA1, HSPA1A/HSPA1B and steroid receptors. Upon ligand binding dissociates from the complex and FKBP4 takes its place. Interacts with functionally mature heterooligomeric progesterone receptor complexes along with HSP90 and TEBP. Interacts with IFI44L; this interaction modulates the kinase activity of IKBKB and IKBKE. Interacts with IKBKB and IKBKE.

It is found in the cytoplasm. The protein resides in the nucleus. It catalyses the reaction [protein]-peptidylproline (omega=180) = [protein]-peptidylproline (omega=0). With respect to regulation, inhibited by FK506 but not cyclosporin. Its function is as follows. Immunophilin protein with PPIase and co-chaperone activities. Component of unligated steroid receptors heterocomplexes through interaction with heat-shock protein 90 (HSP90). Plays a role in the intracellular trafficking of heterooligomeric forms of steroid hormone receptors maintaining the complex into the cytoplasm when unliganded. Acts as a regulator of Akt/AKT1 activity by promoting the interaction between Akt/AKT1 and PHLPP1, thereby enhancing dephosphorylation and subsequent activation of Akt/AKT1. Interacts with IKBKE and IKBKB which facilitates IKK complex assembly leading to increased IKBKE and IKBKB kinase activity, NF-kappaB activation, and IFN production. In Pongo abelii (Sumatran orangutan), this protein is Peptidyl-prolyl cis-trans isomerase FKBP5 (FKBP5).